The primary structure comprises 377 residues: MAKRDCYEVLGISRDATEKEVKKAYKRLAMKYHPDRTSGNDELEVKFKEVKEAYEILNDSQKKAAYDQYGHDGVNQQGRGGFDNSDFGDQFGDIFGDIFGGGRRGGGGGGQRPQQGSDLRYNMELTLEEAVRGISKEIQIPTQVHCEQCNGSGAKKGTEAKTCGTCYGQGQVQMRQGFFAVNQACPTCRGQGKIISDPCHKCHGHGRYERSKNMSVKIPAGVDTGDRIRLSGEGEAGEHGGPAGDLYVQMNVLPHHVFERDGNNLHCEVPISFTEAALGSEIEVPTLDGRVKLKIPAETQTGRVFRMRNKGVKSVRSHATGDLMCKVMVETPVKLSSKQRDLLKEFETLCSSSSTKHKPKSEGFLTSIKTFFDDLSS.

Residues 5–70 form the J domain; the sequence is DCYEVLGISR…QKKAAYDQYG (66 aa). The CR-type zinc-finger motif lies at 133–211; the sequence is GISKEIQIPT…CHGHGRYERS (79 aa). 8 residues coordinate Zn(2+): cysteine 146, cysteine 149, cysteine 163, cysteine 166, cysteine 185, cysteine 188, cysteine 199, and cysteine 202. CXXCXGXG motif repeat units follow at residues 146 to 153, 163 to 170, 185 to 192, and 199 to 206; these read CEQCNGSG, CGTCYGQG, CPTCRGQG, and CHKCHGHG.

The protein belongs to the DnaJ family. In terms of assembly, homodimer. The cofactor is Zn(2+).

It is found in the cytoplasm. Participates actively in the response to hyperosmotic and heat shock by preventing the aggregation of stress-denatured proteins and by disaggregating proteins, also in an autonomous, DnaK-independent fashion. Unfolded proteins bind initially to DnaJ; upon interaction with the DnaJ-bound protein, DnaK hydrolyzes its bound ATP, resulting in the formation of a stable complex. GrpE releases ADP from DnaK; ATP binding to DnaK triggers the release of the substrate protein, thus completing the reaction cycle. Several rounds of ATP-dependent interactions between DnaJ, DnaK and GrpE are required for fully efficient folding. Also involved, together with DnaK and GrpE, in the DNA replication of plasmids through activation of initiation proteins. The polypeptide is Chaperone protein DnaJ (Psychromonas ingrahamii (strain DSM 17664 / CCUG 51855 / 37)).